A 347-amino-acid polypeptide reads, in one-letter code: S-adenosylmethionine:tRNA ribosyltransferase-isomerase (347 aa).

This sequence belongs to the QueA family. In terms of assembly, monomer.

Its subcellular location is the cytoplasm. The catalysed reaction is 7-aminomethyl-7-carbaguanosine(34) in tRNA + S-adenosyl-L-methionine = epoxyqueuosine(34) in tRNA + adenine + L-methionine + 2 H(+). It participates in tRNA modification; tRNA-queuosine biosynthesis. Its function is as follows. Transfers and isomerizes the ribose moiety from AdoMet to the 7-aminomethyl group of 7-deazaguanine (preQ1-tRNA) to give epoxyqueuosine (oQ-tRNA). The sequence is that of S-adenosylmethionine:tRNA ribosyltransferase-isomerase from Xylella fastidiosa (strain 9a5c).